A 345-amino-acid chain; its full sequence is Phosphoribosylformylglycinamidine cyclo-ligase (345 aa).

It belongs to the AIR synthase family.

It localises to the cytoplasm. It catalyses the reaction 2-formamido-N(1)-(5-O-phospho-beta-D-ribosyl)acetamidine + ATP = 5-amino-1-(5-phospho-beta-D-ribosyl)imidazole + ADP + phosphate + H(+). It participates in purine metabolism; IMP biosynthesis via de novo pathway; 5-amino-1-(5-phospho-D-ribosyl)imidazole from N(2)-formyl-N(1)-(5-phospho-D-ribosyl)glycinamide: step 2/2. The sequence is that of Phosphoribosylformylglycinamidine cyclo-ligase from Anaeromyxobacter dehalogenans (strain 2CP-C).